The sequence spans 329 residues: Neuropeptides B/W receptor type 1 (329 aa).

Residues 1–39 lie on the Extracellular side of the membrane; the sequence is MHNLSLFEPGRGNVSCGGPFLGCPNESNPAPLPLPQPLA. N-linked (GlcNAc...) asparagine glycosylation is found at Asn-3, Asn-13, and Asn-25. A helical transmembrane segment spans residues 40–63; it reads VAVPVVYGVICAVGLAGNSAVLYV. Over 64–74 the chain is Cytoplasmic; sequence LLRTPRMKTVT. A helical transmembrane segment spans residues 75-99; the sequence is NVFILNLAIADELFTLVLPINIADF. At 100-114 the chain is on the extracellular side; it reads LLRRWPFGEVMCKLI. An intrachain disulfide couples Cys-111 to Cys-190. A helical membrane pass occupies residues 115–134; the sequence is VAVDQYNTFSSLYFLAVMSA. Over 135 to 159 the chain is Cytoplasmic; sequence DRYLVVLATAESRRVSGRTYGAARA. Residues 160–179 form a helical membrane-spanning segment; sequence VSLAVWALVTLVVLPFAVFA. Residues 180–204 are Extracellular-facing; that stretch reads RLDEEQGRRQCVLVFPQPEAFWWRA. The chain crosses the membrane as a helical span at residues 205 to 226; sequence SRLYTLVLGFAIPVSTICALYI. The Cytoplasmic portion of the chain corresponds to 227-250; that stretch reads TLLCRLRAIQLDSHAKALDRAKKR. The chain crosses the membrane as a helical span at residues 251-275; it reads VTLLVVAILAVCLLCWTPYHLSTIV. The Extracellular segment spans residues 276–285; it reads ALTTDLPQTP. The helical transmembrane segment at 286–300 threads the bilayer; it reads LVIGISYFITSLSYA. At 301–329 the chain is on the cytoplasmic side; the sequence is NSCLNPFLYAFLDDSFRRSLRQLVSCRTA.

This sequence belongs to the G-protein coupled receptor 1 family.

The protein resides in the cell membrane. Its function is as follows. Interacts specifically with a number of opioid ligands. Receptor for neuropeptides B and W, which may be involved in neuroendocrine system regulation, food intake and the organization of other signals. The protein is Neuropeptides B/W receptor type 1 (Npbwr1) of Rattus norvegicus (Rat).